Reading from the N-terminus, the 129-residue chain is Transcription antitermination protein NusB (129 aa).

This sequence belongs to the NusB family.

Involved in transcription antitermination. Required for transcription of ribosomal RNA (rRNA) genes. Binds specifically to the boxA antiterminator sequence of the ribosomal RNA (rrn) operons. This chain is Transcription antitermination protein NusB, found in Staphylococcus aureus (strain MRSA252).